Consider the following 236-residue polypeptide: TVP38/TMEM64 family membrane protein YdjX (236 aa).

5 consecutive transmembrane segments (helical) span residues 7 to 27, 50 to 70, 72 to 92, 156 to 176, and 192 to 212; these read FLFA…FGLF, LYIL…ILVI, GGIV…ATLA, IAFW…IVIY, and FILQ…LAKL. The interval 73–183 is VTT domain; sequence GIVFGPLLGT…VIYTVMASDL (111 aa).

The protein belongs to the TVP38/TMEM64 family.

Its subcellular location is the cell membrane. The chain is TVP38/TMEM64 family membrane protein YdjX (ydjX) from Escherichia coli (strain K12).